A 238-amino-acid polypeptide reads, in one-letter code: Protein Iojap, chloroplastic (238 aa).

A chloroplast-targeting transit peptide spans Met1–Arg66.

It belongs to the Iojap/RsfS family. Interacts with chloroplast ribosomal protein uL14c (rpl14).

It localises to the plastid. It is found in the chloroplast. Functionally, may be a ribosome silencing factor (Potential). Involved in plastid biogenesis. The chain is Protein Iojap, chloroplastic (IJ) from Arabidopsis thaliana (Mouse-ear cress).